A 362-amino-acid polypeptide reads, in one-letter code: Ciliary neurotrophic factor receptor subunit alpha (362 aa).

A signal peptide spans 1 to 19 (MANPVPSACCVVLAAVVVV). Residues 23 to 103 (RHSQQDSHIQ…HLKYQTYLRV (81 aa)) form the Ig-like C2-type domain. A disulfide bond links Cys-44 and Cys-87. Asn-58, Asn-68, Asn-140, and Asn-188 each carry an N-linked (GlcNAc...) asparagine glycan. Fibronectin type-III domains follow at residues 106–203 (PPKE…VKPD) and 204–304 (PPES…TEEP). A WSXWS motif motif is present at residues 288-292 (WSDWS). Asp-334 carries GPI-anchor amidated aspartate lipidation. Positions 335-362 (KGAGVGSGAVAVCWTAGLVLAAYGVLFI) are cleaved as a propeptide — removed in mature form.

It belongs to the type I cytokine receptor family. Type 3 subfamily. In terms of assembly, heterotrimer of the alpha subunit, LIFR and IL6ST. Highly expressed in nervous system. Also found in skeletal muscle.

The protein localises to the cell membrane. In terms of biological role, binds to CNTF (GPA). The alpha subunit provides the receptor specificity. The chain is Ciliary neurotrophic factor receptor subunit alpha (CNTFR) from Gallus gallus (Chicken).